The chain runs to 210 residues: mRNA 3'-end-processing protein YTH1 (210 aa).

5 consecutive C3H1-type zinc fingers follow at residues D28–P59, F61–N88, L89–H117, K118–H142, and V143–F169.

Belongs to the CPSF4/YTH1 family.

The protein resides in the nucleus. Its function is as follows. Component of the cleavage factor I (CF I) involved in pre-mRNA 3'-end processing. The sequence is that of mRNA 3'-end-processing protein YTH1 (YTH1) from Kluyveromyces lactis (strain ATCC 8585 / CBS 2359 / DSM 70799 / NBRC 1267 / NRRL Y-1140 / WM37) (Yeast).